Reading from the N-terminus, the 292-residue chain is Acetylglutamate kinase (292 aa).

Residues 64–65 (GG), R86, and N190 each bind substrate.

It belongs to the acetylglutamate kinase family. ArgB subfamily.

It is found in the cytoplasm. It catalyses the reaction N-acetyl-L-glutamate + ATP = N-acetyl-L-glutamyl 5-phosphate + ADP. It participates in amino-acid biosynthesis; L-arginine biosynthesis; N(2)-acetyl-L-ornithine from L-glutamate: step 2/4. Catalyzes the ATP-dependent phosphorylation of N-acetyl-L-glutamate. The chain is Acetylglutamate kinase from Geobacter sulfurreducens (strain ATCC 51573 / DSM 12127 / PCA).